A 138-amino-acid chain; its full sequence is Histone H2B (138 aa).

Positions 1 to 10 (MPPKAAEKKP) are enriched in basic and acidic residues. The disordered stretch occupies residues 1–47 (MPPKAAEKKPSTAGKAPAGKAPEKKEAGKKTTAAGGEKKKRSKTRKE). Lys8 and Lys9 each carry N6-acetyllysine; alternate. Residues Lys8 and Lys9 each participate in a glycyl lysine isopeptide (Lys-Gly) (interchain with G-Cter in SUMO); alternate cross-link. Residues 11-20 (STAGKAPAGK) show a composition bias toward low complexity. Lys15 carries the N6-acetyllysine modification. An N6-acetyllysine; alternate modification is found at Lys24. Lys24 participates in a covalent cross-link: Glycyl lysine isopeptide (Lys-Gly) (interchain with G-Cter in SUMO); alternate. A Glycyl lysine isopeptide (Lys-Gly) (interchain with G-Cter in SUMO) cross-link involves residue Lys25. Lys132 is covalently cross-linked (Glycyl lysine isopeptide (Lys-Gly) (interchain with G-Cter in ubiquitin)).

The protein belongs to the histone H2B family. As to quaternary structure, the nucleosome is a histone octamer containing two molecules each of H2A, H2B, H3 and H4 assembled in one H3-H4 heterotetramer and two H2A-H2B heterodimers. The octamer wraps approximately 147 bp of DNA. Post-translationally, monoubiquitinated to form H2BK123ub1. H2BK123ub1 gives a specific tag for epigenetic transcriptional activation and is also prerequisite for H3K4me and H3K79me formation. H2BK123ub1 also modulates the formation of double-strand breaks during meiosis and is a prerequisite for DNA-damage checkpoint activation. Acetylated by GCN5 to form H2BK11ac and H2BK16ac. H2BK16ac can also be formed by ESA1. Acetylation of N-terminal lysines and particularly formation of H2BK11acK16ac has a positive effect on transcription. In terms of processing, sumoylation to form H2BK6su or H2BK7su, and probably also H2BK16su or H2BK17su, occurs preferentially near the telomeres and represses gene transcription.

The protein resides in the nucleus. The protein localises to the chromosome. In terms of biological role, core component of nucleosome. Nucleosomes wrap and compact DNA into chromatin, limiting DNA accessibility to the cellular machineries which require DNA as a template. Histones thereby play a central role in transcription regulation, DNA repair, DNA replication and chromosomal stability. DNA accessibility is regulated via a complex set of post-translational modifications of histones, also called histone code, and nucleosome remodeling. In Ajellomyces capsulatus (Darling's disease fungus), this protein is Histone H2B (HTB1).